The sequence spans 432 residues: Adenylosuccinate synthetase (432 aa).

GTP contacts are provided by residues 13-19 (GDEGKGK) and 41-43 (GHT). Aspartate 14 serves as the catalytic Proton acceptor. Mg(2+) contacts are provided by aspartate 14 and glycine 41. IMP contacts are provided by residues 14 to 17 (DEGK), 39 to 42 (NAGH), threonine 130, arginine 144, glutamine 225, threonine 240, and arginine 304. Catalysis depends on histidine 42, which acts as the Proton donor. Position 300 to 306 (300 to 306 (ATTGRSR)) interacts with substrate. GTP-binding positions include arginine 306, 332 to 334 (KLD), and 415 to 417 (STG).

This sequence belongs to the adenylosuccinate synthetase family. As to quaternary structure, homodimer. It depends on Mg(2+) as a cofactor.

It is found in the cytoplasm. The catalysed reaction is IMP + L-aspartate + GTP = N(6)-(1,2-dicarboxyethyl)-AMP + GDP + phosphate + 2 H(+). It participates in purine metabolism; AMP biosynthesis via de novo pathway; AMP from IMP: step 1/2. In terms of biological role, plays an important role in the de novo pathway of purine nucleotide biosynthesis. Catalyzes the first committed step in the biosynthesis of AMP from IMP. In Yersinia pseudotuberculosis serotype O:1b (strain IP 31758), this protein is Adenylosuccinate synthetase.